The following is a 224-amino-acid chain: Cytochrome c biogenesis ATP-binding export protein CcmA (224 aa).

In terms of domain architecture, ABC transporter spans 1-220 (MQNAEAAPAL…EYAHAEVVGA (220 aa)). 40-47 (GANGSGKT) lines the ATP pocket.

The protein belongs to the ABC transporter superfamily. CcmA exporter (TC 3.A.1.107) family. As to quaternary structure, the complex is composed of two ATP-binding proteins (CcmA) and two transmembrane proteins (CcmB).

It localises to the cell inner membrane. It carries out the reaction heme b(in) + ATP + H2O = heme b(out) + ADP + phosphate + H(+). Part of the ABC transporter complex CcmAB involved in the biogenesis of c-type cytochromes; once thought to export heme, this seems not to be the case, but its exact role is uncertain. Responsible for energy coupling to the transport system. The sequence is that of Cytochrome c biogenesis ATP-binding export protein CcmA from Bordetella bronchiseptica (strain ATCC BAA-588 / NCTC 13252 / RB50) (Alcaligenes bronchisepticus).